The following is a 101-amino-acid chain: Urease subunit beta (101 aa).

Belongs to the urease beta subunit family. As to quaternary structure, heterotrimer of UreA (gamma), UreB (beta) and UreC (alpha) subunits. Three heterotrimers associate to form the active enzyme.

It localises to the cytoplasm. It carries out the reaction urea + 2 H2O + H(+) = hydrogencarbonate + 2 NH4(+). Its pathway is nitrogen metabolism; urea degradation; CO(2) and NH(3) from urea (urease route): step 1/1. This chain is Urease subunit beta, found in Paraburkholderia phymatum (strain DSM 17167 / CIP 108236 / LMG 21445 / STM815) (Burkholderia phymatum).